Reading from the N-terminus, the 695-residue chain is NADPH--cytochrome P450 reductase (695 aa).

Topologically, residues 1 to 8 (MAQLDTLD) are lumenal. Residues 9–31 (VVVLAVLLAGSIAYFTKGTFWAV) form a helical membrane-spanning segment. At 32–695 (AKDPYASSGP…SGSYQEDVWS (664 aa)) the chain is on the cytoplasmic side. The region spanning 66 to 221 (CVIFYGSQTG…DFLAWKEPMW (156 aa)) is the Flavodoxin-like domain. FMN-binding positions include 72 to 77 (SQTGTA), 123 to 126 (ATYG), 169 to 178 (LGNNTYEHYN), and aspartate 204. Residues 277–538 (HNPYIAPIVE…HVRHSNFKLP (262 aa)) enclose the FAD-binding FR-type domain. Arginine 296 is an NADP(+) binding site. FAD contacts are provided by residues 451–454 (RYYS), 469–471 (TAV), and 486–489 (GVTT). Residues 497–516 (QKQNGDPSPDPHGQTYAING) are disordered. NADP(+) contacts are provided by residues threonine 552, 614–615 (SR), 620–624 (KVYVQ), and glutamate 656. Tryptophan 694 contacts FAD.

It belongs to the NADPH--cytochrome P450 reductase family. This sequence in the N-terminal section; belongs to the flavodoxin family. The protein in the C-terminal section; belongs to the flavoprotein pyridine nucleotide cytochrome reductase family. FAD is required as a cofactor. Requires FMN as cofactor.

It localises to the endoplasmic reticulum membrane. The protein localises to the mitochondrion outer membrane. The protein resides in the cell membrane. The catalysed reaction is 2 oxidized [cytochrome P450] + NADPH = 2 reduced [cytochrome P450] + NADP(+) + H(+). Functionally, this enzyme is required for electron transfer from NADP to cytochrome P450 in microsomes. It can also provide electron transfer to heme oxygenase and cytochrome B5. Involved in ergosterol biosynthesis. This is NADPH--cytochrome P450 reductase from Emericella nidulans (strain FGSC A4 / ATCC 38163 / CBS 112.46 / NRRL 194 / M139) (Aspergillus nidulans).